Here is a 477-residue protein sequence, read N- to C-terminus: MVRVRLAPSPTGTLHIGTARTAVFNWLYAKSQNGDFLLRIEDTDKERSKPEFTQNILEGLQWLGIDWAEDPVIQSERVAQHRDAIRALLEKGLAYRCYANESELATMRDAQKASNQPPRYDNRHRNLTKEQETAYQAEGRDAVIRFRIDDDADIHWNDLVRGTMRWRGGDLGGDMVVARRAPADQIGDPLYNLVVVVDDAAMEITHVIRGEDHIANTAKQLLLYEALGLPSPTFAHAPLILNADGKKLSKRDGVTSINEFRSMGYTAEAIANYMTLLGWSVPEGMEERFTLREAADQFSFDRVNKAGARFDWDKLNWLNAQVLHSWSSAQLLDVLRPLWLKNGWTIPNDNGWALELCELLGPSLTLLNDGLDQAAPFFECPDLEDDGLKQLQSEGAKAAISHLIDALQAERWMGTDFDQAQTLLGDAAKAAGVKKGVMMKSLRAALLGRLQGPDLLTTWSLLAKNSDDLPRLQRCLS.

The short motif at 8 to 18 (PSPTGTLHIGT) is the 'HIGH' region element. A 'KMSKS' region motif is present at residues 247–251 (KLSKR). ATP is bound at residue K250.

Belongs to the class-I aminoacyl-tRNA synthetase family. Glutamate--tRNA ligase type 1 subfamily. Monomer.

The protein resides in the cytoplasm. The enzyme catalyses tRNA(Glu) + L-glutamate + ATP = L-glutamyl-tRNA(Glu) + AMP + diphosphate. Its function is as follows. Catalyzes the attachment of glutamate to tRNA(Glu) in a two-step reaction: glutamate is first activated by ATP to form Glu-AMP and then transferred to the acceptor end of tRNA(Glu). This Synechococcus sp. (strain CC9902) protein is Glutamate--tRNA ligase.